We begin with the raw amino-acid sequence, 105 residues long: Large ribosomal subunit protein uL24 (105 aa).

The protein belongs to the universal ribosomal protein uL24 family. Part of the 50S ribosomal subunit.

Functionally, one of two assembly initiator proteins, it binds directly to the 5'-end of the 23S rRNA, where it nucleates assembly of the 50S subunit. In terms of biological role, one of the proteins that surrounds the polypeptide exit tunnel on the outside of the subunit. The chain is Large ribosomal subunit protein uL24 from Xylella fastidiosa (strain 9a5c).